A 305-amino-acid chain; its full sequence is MTSACEAVPQLGLVCLTVGPEVRFRTVTLSRYRALSPAEREAKLLDLYSSNIKTLRGAADYCAAHDIRLYRLSSSLFPMLDLAGDDTGAAVLTHLAPQLLEAGHAFTDAGVRLLMHPEQFIVLNSDRPEVRESSVRAMSAHARVMDGLGLARTPWNLLLLHGGKGGRGAELAALIPDLPDPVRLRLGLENDERAYSPAELLPICEATGTPLVFDAHHHVVHDKLPDQEDPSVREWVLRARATWQPPEWQVVHLSNGIEGPQDRRHSHLIADFPSAYADVPWIEVEAKGKEEAIAALRLMAPFKKD.

The protein belongs to the uve1/UvsE family. Requires Mn(2+) as cofactor.

Functionally, component in a DNA repair pathway. Removal of UV LIGHT damaged nucleotides. Recognizes pyrimidine dimers and cleave a phosphodiester bond immediately 5' to the lesion. The chain is UV DNA damage endonuclease (uvsE) from Deinococcus radiodurans (strain ATCC 13939 / DSM 20539 / JCM 16871 / CCUG 27074 / LMG 4051 / NBRC 15346 / NCIMB 9279 / VKM B-1422 / R1).